A 368-amino-acid chain; its full sequence is Cobalt-precorrin-5B C(1)-methyltransferase (368 aa).

This sequence belongs to the CbiD family.

The catalysed reaction is Co-precorrin-5B + S-adenosyl-L-methionine = Co-precorrin-6A + S-adenosyl-L-homocysteine. The protein operates within cofactor biosynthesis; adenosylcobalamin biosynthesis; cob(II)yrinate a,c-diamide from sirohydrochlorin (anaerobic route): step 6/10. Functionally, catalyzes the methylation of C-1 in cobalt-precorrin-5B to form cobalt-precorrin-6A. The polypeptide is Cobalt-precorrin-5B C(1)-methyltransferase (Brucella abortus (strain S19)).